The chain runs to 93 residues: uncharacterized protein (93 aa).

To E.coli YdbD C-terminal region.

This is an uncharacterized protein from Escherichia coli (strain K12).